Here is a 189-residue protein sequence, read N- to C-terminus: Apolipoprotein D (189 aa).

A signal peptide spans 1 to 20 (MVMLLLLLSALAGLFGAAEG). Pyrrolidone carboxylic acid is present on Q21. 2 cysteine pairs are disulfide-bonded: C28/C134 and C61/C185. N-linked (GlcNAc...) asparagine glycosylation is found at N65 and N98.

Belongs to the calycin superfamily. Lipocalin family. As to quaternary structure, homodimer.

It is found in the secreted. APOD occurs in the macromolecular complex with lecithin-cholesterol acyltransferase. It is probably involved in the transport and binding of bilin. Appears to be able to transport a variety of ligands in a number of different contexts. The chain is Apolipoprotein D (APOD) from Macaca fascicularis (Crab-eating macaque).